The primary structure comprises 70 residues: Adenylate kinase (70 aa).

10-15 (GAGKGT) provides a ligand contact to ATP. An NMP region spans residues 30–59 (STGDLFRANISKQTELGKLAKSYMDKGELV). AMP is bound by residues T31, R36, and 57 to 59 (ELV).

Belongs to the adenylate kinase family. Monomer.

Its subcellular location is the cytoplasm. It catalyses the reaction AMP + ATP = 2 ADP. Its pathway is purine metabolism; AMP biosynthesis via salvage pathway; AMP from ADP: step 1/1. Catalyzes the reversible transfer of the terminal phosphate group between ATP and AMP. Plays an important role in cellular energy homeostasis and in adenine nucleotide metabolism. This is Adenylate kinase (adk) from Streptomyces scabiei.